Reading from the N-terminus, the 1476-residue chain is Cystic fibrosis transmembrane conductance regulator (1476 aa).

Topologically, residues 1–77 (MQKSPLEKAS…QLIHALRRCF (77 aa)) are cytoplasmic. Residues 78–98 (FWRFLFYGILLYLGEVTKAVQ) form a helical membrane-spanning segment. Residues 81-365 (FLFYGILLYL…TAVQIWYDSF (285 aa)) enclose the ABC transmembrane type-1 1 domain. Residues 99–122 (PVLLGRIIASYDPENKVERSIAIY) lie on the Extracellular side of the membrane. Residues 123 to 146 (LGIGLCLLFIVRTLLLHPAIFGLH) traverse the membrane as a helical segment. Topologically, residues 147-195 (RIGMQMRTAMFSLIYKKTLKLSSRVLDKISIGQLVSLLSNNLNKFDEGL) are cytoplasmic. A helical membrane pass occupies residues 196-216 (ALAHFIWIAPLQVTLLMGLLW). Residues 217–222 (DLLQFS) lie on the Extracellular side of the membrane. The chain crosses the membrane as a helical span at residues 223 to 243 (AFCGLGLLIILVIFQAILGKM). At 244–298 (MVKYRDQRAAKINERLVITSEIIDNIYSVKAYCWESAMEKMIENLREVELKMTRK) the chain is on the cytoplasmic side. The helical transmembrane segment at 299–319 (AAYMRFFTSSAFFFSGFFVVF) threads the bilayer. The Extracellular portion of the chain corresponds to 320-339 (LSVLPYTVINGIVLRKIFTT). A helical transmembrane segment spans residues 340 to 358 (ISFCIVLRMSVTRQFPTAV). At 359-853 (QIWYDSFGMI…YLRYFTLHKG (495 aa)) the chain is on the cytoplasmic side. ATP-binding positions include Trp-401, 458-465 (GSTGSGKT), and Gln-493. Positions 423–646 (SDENNVSFSH…RPDFSSKLMG (224 aa)) constitute an ABC transporter 1 domain. Cys-524 carries S-palmitoyl cysteine lipidation. Residues Ser-549 and Ser-660 each carry the phosphoserine modification. Residues 654-826 (TEERRSSILT…EEINEEDLKE (173 aa)) are disordered R region. Residue Ser-670 is modified to Phosphoserine; by PKA. 3 positions are modified to phosphoserine: Ser-684, Ser-698, and Ser-710. Thr-715 bears the Phosphothreonine mark. 5 positions are modified to phosphoserine: Ser-732, Ser-763, Ser-785, Ser-790, and Ser-808. The chain crosses the membrane as a helical span at residues 854–874 (LLLVLIWCVLVFLVEVAASLF). The 300-residue stretch at 854–1153 (LLLVLIWCVL…SSIDTDSLMR (300 aa)) folds into the ABC transmembrane type-1 2 domain. Residues 875 to 913 (VLWLLKNNPVNSGNNGTKISNSSYVVIITSTSFYYIFYI) lie on the Extracellular side of the membrane. N-linked (GlcNAc...) asparagine glycans are attached at residues Asn-889 and Asn-895. Residues 914 to 934 (YVGVADTLLALSLFRGLPLVH) traverse the membrane as a discontinuously helical segment. Topologically, residues 935-985 (TLITASKILHRKMLHSILHAPMSTISKLKAGGILNRFSKDIAILDDFLPLT) are cytoplasmic. Residues 986 to 1006 (IFDFIQLVFIVIGAIIVVSAL) form a helical membrane-spanning segment. Topologically, residues 1007–1008 (QP) are extracellular. The helical transmembrane segment at 1009-1029 (YIFLATVPGLVVFILLRAYFL) threads the bilayer. The Cytoplasmic segment spans residues 1030 to 1090 (HTAQQLKQLE…TANWFMYLAT (61 aa)). Residues 1091–1111 (LRWFQMRIDMIFVLFFIVVTF) form a helical membrane-spanning segment. Topologically, residues 1112–1125 (ISILTTGEGEGTAG) are extracellular. The helical transmembrane segment at 1126-1146 (IILTLAMNIMSTLQWAVNSSI) threads the bilayer. Topologically, residues 1147–1476 (DTDSLMRSVS…TEEEVQETRL (330 aa)) are cytoplasmic. Residues 1208 to 1439 (VKDLTVKYMD…KSIFQQAISS (232 aa)) form the ABC transporter 2 domain. Residues Tyr-1215 and 1240–1247 (GRTGSGKS) each bind ATP. The segment at 1382–1476 (RVLKQAFAGC…TEEEVQETRL (95 aa)) is interaction with GORASP2. Cys-1391 carries S-palmitoyl cysteine lipidation. 2 positions are modified to phosphoserine: Ser-1440 and Ser-1452. The interval 1446-1476 (FQGRHSSKHKPRTQITALKEETEEEVQETRL) is disordered. Residues 1466-1476 (ETEEEVQETRL) are compositionally biased toward acidic residues. The PDZ-binding signature appears at 1474–1476 (TRL).

The protein belongs to the ABC transporter superfamily. ABCC family. CFTR transporter (TC 3.A.1.202) subfamily. Monomer; does not require oligomerization for channel activity. May form oligomers in the membrane. Interacts with SLC26A3, SLC26A6 and NHERF1. Interacts with SHANK2. Interacts with MYO6. Interacts (via C-terminus) with GOPC (via PDZ domain); this promotes CFTR internalization and thereby decreases channel activity. Interacts with SLC4A7 through NHERF1. Found in a complex with MYO5B and RAB11A. Interacts with ANO1. Interacts with SLC26A8. Interacts with AHCYL1; the interaction increases CFTR activity. Interacts with CSE1L. The core-glycosylated form interacts with GORASP2 (via PDZ GRASP-type 1 domain) in respone to ER stress. Interacts with MARCHF2; the interaction leads to CFTR ubiqtuitination and degradation. Interacts with ADGRG2. In terms of processing, N-glycosylated. Phosphorylated; cAMP treatment promotes phosphorylation and activates the channel. Dephosphorylation decreases the ATPase activity (in vitro). Phosphorylation at PKA sites activates the channel. Phosphorylation at PKC sites enhances the response to phosphorylation by PKA. Phosphorylated by AMPK; this inhibits channel activity. Post-translationally, ubiquitinated, leading to its degradation in the lysosome. Deubiquitination by USP10 in early endosomes enhances its endocytic recycling to the cell membrane. Ubiquitinated by RNF185 during ER stress. Ubiquitinated by MARCHF2. Expressed in the epididymis (at protein level). In the initial segment of the epididymis, detected on both the luminal and basolateral sides of the ducts where it is expressed in the duct columnar cells as well as in the interstitial smooth muscle cells. Expressed in sperm in the caput. In the cauda, detected along the luminal border but not continuously and is also expressed on the basolateral surface. Within the caudal lumen, detected on sperm. Isoform 1: Expressed in a variety of epithelial tissues including colon, kidney, lung, small intestine, pancreatic duct and testis. Isoform 2: Expressed only in testis. Isoform 3: Expressed only in testis.

Its subcellular location is the apical cell membrane. The protein localises to the early endosome membrane. It localises to the cell membrane. The protein resides in the recycling endosome membrane. It is found in the endoplasmic reticulum membrane. Its subcellular location is the nucleus. It catalyses the reaction ATP + H2O + closed Cl(-) channel = ADP + phosphate + open Cl(-) channel.. It carries out the reaction chloride(in) = chloride(out). The enzyme catalyses hydrogencarbonate(in) = hydrogencarbonate(out). The catalysed reaction is ATP + H2O = ADP + phosphate + H(+). Its function is as follows. Epithelial ion channel that plays an important role in the regulation of epithelial ion and water transport and fluid homeostasis. Mediates the transport of chloride ions across the cell membrane. Possesses an intrinsic ATPase activity and utilizes ATP to gate its channel; the passive flow of anions through the channel is gated by cycles of ATP binding and hydrolysis by the ATP-binding domains. The ion channel is also permeable to HCO(3)(-); selectivity depends on the extracellular chloride concentration. Exerts its function also by modulating the activity of other ion channels and transporters. Contributes to the regulation of the pH and the ion content of the epithelial fluid layer. Modulates the activity of the epithelial sodium channel (ENaC) complex, in part by regulating the cell surface expression of the ENaC complex. May regulate bicarbonate secretion and salvage in epithelial cells by regulating the transporter SLC4A7. Can inhibit the chloride channel activity of ANO1. Plays a role in the chloride and bicarbonate homeostasis during sperm epididymal maturation and capacitation. The chain is Cystic fibrosis transmembrane conductance regulator from Mus musculus (Mouse).